Here is a 320-residue protein sequence, read N- to C-terminus: Foldase protein PrsA (320 aa).

The N-terminal stretch at 1 to 20 (MKMINKLIVPVTASALLLGA) is a signal peptide. Residue Cys21 is the site of N-palmitoyl cysteine attachment. Cys21 carries S-diacylglycerol cysteine lipidation. One can recognise a PpiC domain in the interval 139 to 245 (EDSKKASHIL…FGYHIIKADK (107 aa)). Residues 159-198 (EGLDDKEAKQKAEEIQKEVSKDPSKFGEIAKKESMDTGSA) are disordered.

The protein belongs to the PrsA family.

Its subcellular location is the cell membrane. The catalysed reaction is [protein]-peptidylproline (omega=180) = [protein]-peptidylproline (omega=0). Functionally, plays a major role in protein secretion by helping the post-translocational extracellular folding of several secreted proteins. The protein is Foldase protein PrsA of Staphylococcus aureus (strain Mu3 / ATCC 700698).